Consider the following 324-residue polypeptide: Galactosylgalactosylxylosylprotein 3-beta-glucuronosyltransferase 2 (324 aa).

Topologically, residues 1–2 (MK) are cytoplasmic. A helical; Signal-anchor for type II membrane protein transmembrane segment spans residues 3–23 (SALCNRFFILLPWILIVIIML). Residues 24-324 (DVDPRRPAPQ…YHMDTVNIEV (301 aa)) lie on the Lumenal side of the membrane. The disordered stretch occupies residues 34–78 (LTSRPYFSPHTVGCGGSRVPLRRSSPGRDAAEKRNESRPQLQPEP). N-linked (GlcNAc...) asparagine glycosylation is present at asparagine 68. Mn(2+) is bound at residue aspartate 188. The active-site Proton acceptor is glutamate 274. Residue asparagine 293 is glycosylated (N-linked (GlcNAc...) asparagine).

This sequence belongs to the glycosyltransferase 43 family. Homodimer. Requires Mn(2+) as cofactor. Expressed in the cerebral cortex, cerebellum and whole brain.

It localises to the golgi apparatus membrane. The catalysed reaction is 3-O-(beta-D-galactosyl-(1-&gt;3)-beta-D-galactosyl-(1-&gt;4)-beta-D-xylosyl)-L-seryl-[protein] + UDP-alpha-D-glucuronate = 3-O-(beta-D-GlcA-(1-&gt;3)-beta-D-Gal-(1-&gt;3)-beta-D-Gal-(1-&gt;4)-beta-D-Xyl)-L-seryl-[protein] + UDP + H(+). The protein operates within protein modification; protein glycosylation. Its function is as follows. Involved in the biosynthesis of L2/HNK-1 carbohydrate epitope on both glycolipids and glycoproteins. Substrates include asialo-orosomucoid (ASOR), paragloboside (lacto-N-neotetraosylceramide), Gal-beta-1,4-GlcNAc-beta-1,3-Gal-beta-1,4-Glc-pyridylamine and Gal-beta-1,3-GlcNAc-beta-1,3-Gal-beta-1,4-Glc-pyridylamine. The polypeptide is Galactosylgalactosylxylosylprotein 3-beta-glucuronosyltransferase 2 (B3gat2) (Rattus norvegicus (Rat)).